A 166-amino-acid polypeptide reads, in one-letter code: Interferon gamma (166 aa).

Residues 1–23 (MKYTSSFLALLLCVLLGFSGSYG) form the signal peptide. Gln-24 bears the Pyrrolidone carboxylic acid mark. N-linked (GlcNAc...) asparagine glycans are attached at residues Asn-39 and Asn-106.

The protein belongs to the type II (or gamma) interferon family. In terms of assembly, homodimer. Interacts with IFNGR1 (via extracellular domain); this interaction promotes IFNGR1 dimerization. Released primarily from activated T lymphocytes.

It localises to the secreted. Type II interferon produced by immune cells such as T-cells and NK cells that plays crucial roles in antimicrobial, antiviral, and antitumor responses by activating effector immune cells and enhancing antigen presentation. Primarily signals through the JAK-STAT pathway after interaction with its receptor IFNGR1 to affect gene regulation. Upon IFNG binding, IFNGR1 intracellular domain opens out to allow association of downstream signaling components JAK2, JAK1 and STAT1, leading to STAT1 activation, nuclear translocation and transcription of IFNG-regulated genes. Many of the induced genes are transcription factors such as IRF1 that are able to further drive regulation of a next wave of transcription. Plays a role in class I antigen presentation pathway by inducing a replacement of catalytic proteasome subunits with immunoproteasome subunits. In turn, increases the quantity, quality, and repertoire of peptides for class I MHC loading. Increases the efficiency of peptide generation also by inducing the expression of activator PA28 that associates with the proteasome and alters its proteolytic cleavage preference. Up-regulates as well MHC II complexes on the cell surface by promoting expression of several key molecules such as cathepsins B/CTSB, H/CTSH, and L/CTSL. Participates in the regulation of hematopoietic stem cells during development and under homeostatic conditions by affecting their development, quiescence, and differentiation. The protein is Interferon gamma (IFNG) of Ovis aries (Sheep).